The following is a 249-amino-acid chain: Probable transcriptional regulatory protein GOX1679 (249 aa).

This sequence belongs to the TACO1 family.

The protein resides in the cytoplasm. The polypeptide is Probable transcriptional regulatory protein GOX1679 (Gluconobacter oxydans (strain 621H) (Gluconobacter suboxydans)).